The sequence spans 283 residues: Protein FAM170A (283 aa).

2 disordered regions span residues 1–54 (MKRR…RSQH) and 123–171 (GTPP…AKTP). Over residues 127-138 (SDVSTRNLLSDS) the composition is skewed to polar residues. A compositionally biased stretch (basic and acidic residues) spans 142-153 (GEEKEHEERTES). Threonine 170 is modified (phosphothreonine). The C2H2-type; degenerate zinc-finger motif lies at 181 to 205 (FRCMACCRVFTTMEALQEHVQFGIR). The disordered stretch occupies residues 223–283 (NMESESTQDE…VFHSPKDRNS (61 aa)). Acidic residues predominate over residues 228–246 (STQDEQEEENGNEKEEEEK). Residue serine 268 is modified to Phosphoserine.

It belongs to the FAM170 family.

Its subcellular location is the nucleus. Its function is as follows. Acts as a nuclear transcription factor that positively regulates the expression of heat shock genes. Binds to heat shock promoter elements (HSE). This chain is Protein FAM170A (FAM170A), found in Macaca fascicularis (Crab-eating macaque).